The primary structure comprises 108 residues: Ig light chain C region (108 aa).

Residues 7–102 (PTVSIYCPSL…LTPALAKSFQ (96 aa)) enclose the Ig-like domain. Disulfide bonds link C13/C106 and C28/C86.

The sequence is that of Ig light chain C region from Aquarana catesbeiana (American bullfrog).